A 289-amino-acid chain; its full sequence is MKLCGFEAGLDKPFFLIAGPCVIESEQMALDTAGELKAITAELGIPFIYKSSFDKANRSSGKSFRGLGMEKGLEILATVKREIGVPVLTDIHEIDEIKPVAAVVDVLQTPAFLCRQTDFIRACAQSGKPVNIKKGQFLAPHDMKNVIDKARDAAREAGLPDDVFMACERGVSFGYNNLVSDMRSLAIMRETGAPVVFDATHSVQLPGGQGTSSGGQREFVPVLSRAAVATGVAGLFMETHPDPSKAMSDGPNAVPLSRMKELLAVLKELDTLVKRAGFLEDNFGWPACA.

This sequence belongs to the KdsA family.

The protein localises to the cytoplasm. The catalysed reaction is D-arabinose 5-phosphate + phosphoenolpyruvate + H2O = 3-deoxy-alpha-D-manno-2-octulosonate-8-phosphate + phosphate. Its pathway is carbohydrate biosynthesis; 3-deoxy-D-manno-octulosonate biosynthesis; 3-deoxy-D-manno-octulosonate from D-ribulose 5-phosphate: step 2/3. It participates in bacterial outer membrane biogenesis; lipopolysaccharide biosynthesis. In Cupriavidus necator (strain ATCC 17699 / DSM 428 / KCTC 22496 / NCIMB 10442 / H16 / Stanier 337) (Ralstonia eutropha), this protein is 2-dehydro-3-deoxyphosphooctonate aldolase.